A 183-amino-acid chain; its full sequence is Bifunctional protein PyrR (183 aa).

Positions 98–110 (VVLVDDVLYTGRT) match the PRPP-binding motif.

This sequence belongs to the purine/pyrimidine phosphoribosyltransferase family. PyrR subfamily.

It catalyses the reaction UMP + diphosphate = 5-phospho-alpha-D-ribose 1-diphosphate + uracil. Regulates the transcription of the pyrimidine nucleotide (pyr) operon in response to exogenous pyrimidines. Functionally, also displays a weak uracil phosphoribosyltransferase activity which is not physiologically significant. This chain is Bifunctional protein PyrR, found in Roseiflexus sp. (strain RS-1).